Reading from the N-terminus, the 211-residue chain is ATP phosphoribosyltransferase (211 aa).

The protein belongs to the ATP phosphoribosyltransferase family. Short subfamily. Heteromultimer composed of HisG and HisZ subunits.

It localises to the cytoplasm. The catalysed reaction is 1-(5-phospho-beta-D-ribosyl)-ATP + diphosphate = 5-phospho-alpha-D-ribose 1-diphosphate + ATP. It functions in the pathway amino-acid biosynthesis; L-histidine biosynthesis; L-histidine from 5-phospho-alpha-D-ribose 1-diphosphate: step 1/9. In terms of biological role, catalyzes the condensation of ATP and 5-phosphoribose 1-diphosphate to form N'-(5'-phosphoribosyl)-ATP (PR-ATP). Has a crucial role in the pathway because the rate of histidine biosynthesis seems to be controlled primarily by regulation of HisG enzymatic activity. The protein is ATP phosphoribosyltransferase of Bacillus cereus (strain ATCC 10987 / NRS 248).